Consider the following 525-residue polypeptide: Probable malate:quinone oxidoreductase (525 aa).

It belongs to the MQO family. It depends on FAD as a cofactor.

It catalyses the reaction (S)-malate + a quinone = a quinol + oxaloacetate. It participates in carbohydrate metabolism; tricarboxylic acid cycle; oxaloacetate from (S)-malate (quinone route): step 1/1. The polypeptide is Probable malate:quinone oxidoreductase (Serratia proteamaculans (strain 568)).